The primary structure comprises 336 residues: Ribosomal RNA large subunit methyltransferase F (336 aa).

It belongs to the methyltransferase superfamily. METTL16/RlmF family.

It is found in the cytoplasm. The catalysed reaction is adenosine(1618) in 23S rRNA + S-adenosyl-L-methionine = N(6)-methyladenosine(1618) in 23S rRNA + S-adenosyl-L-homocysteine + H(+). Functionally, specifically methylates the adenine in position 1618 of 23S rRNA. This chain is Ribosomal RNA large subunit methyltransferase F, found in Yersinia pestis bv. Antiqua (strain Nepal516).